The sequence spans 224 residues: Charged multivesicular body protein 4b (224 aa).

Positions 1 to 23 (MSVFGKLFGAGGGKAGKGGPTPQ) are disordered. Residue Ser-2 is modified to N-acetylserine. The segment at 2 to 153 (SVFGKLFGAG…EISTAISKPV (152 aa)) is intramolecular interaction with C-terminus. Position 6 is an N6-acetyllysine (Lys-6). Residues 8–19 (FGAGGGKAGKGG) show a composition bias toward gly residues. Residues 23–183 (QEAIQRLRDT…EELDKNLLEI (161 aa)) adopt a coiled-coil conformation. An N6-acetyllysine modification is found at Lys-114. The segment at 154-224 (GFGEEFDEDE…KELENWAGSM (71 aa)) is intramolecular interaction with N-terminus. A phosphoserine mark is found at Ser-184 and Ser-223. Residues 185 to 224 (GPETVPLPNVPSVALPSKPAKKKEEEDDDMKELENWAGSM) are disordered.

It belongs to the SNF7 family. As to quaternary structure, probable core component of the endosomal sorting required for transport complex III (ESCRT-III). ESCRT-III components are thought to multimerize to form a flat lattice on the perimeter membrane of the endosome. Several assembly forms of ESCRT-III may exist that interact and act sequentially. Interacts with CHMP6 and CHMP4C. Interacts with PDCD6IP; the interaction is direct. Interacts with VPS4A; the interaction is direct. Interacts with VPS4B; the interaction is direct. Interacts with CHMP7. Interacts with CFTR; the interaction requires misfolded CFTR. Interacts with PTPN23. Interacts with CC2D1B. In terms of processing, ISGylated. Isgylation weakens its interaction with VPS4A.

It localises to the cytoplasm. The protein localises to the cytosol. Its subcellular location is the late endosome membrane. The protein resides in the midbody. It is found in the nucleus envelope. Probable core component of the endosomal sorting required for transport complex III (ESCRT-III) which is involved in multivesicular bodies (MVBs) formation and sorting of endosomal cargo proteins into MVBs. MVBs contain intraluminal vesicles (ILVs) that are generated by invagination and scission from the limiting membrane of the endosome and mostly are delivered to lysosomes enabling degradation of membrane proteins, such as stimulated growth factor receptors, lysosomal enzymes and lipids. The MVB pathway appears to require the sequential function of ESCRT-O, -I,-II and -III complexes. ESCRT-III proteins mostly dissociate from the invaginating membrane before the ILV is released. The ESCRT machinery also functions in topologically equivalent membrane fission events, such as the terminal stages of cytokinesis. Together with SPAST, the ESCRT-III complex promotes nuclear envelope sealing and mitotic spindle disassembly during late anaphase. Plays a role in the endosomal sorting pathway. ESCRT-III proteins are believed to mediate the necessary vesicle extrusion and/or membrane fission activities, possibly in conjunction with the AAA ATPase VPS4. When overexpressed, membrane-assembled circular arrays of CHMP4B filaments can promote or stabilize negative curvature and outward budding. CHMP4A/B/C are required for the exosomal release of SDCBP, CD63 and syndecan. Majority of the protein exists in a folded closed conformation. The polypeptide is Charged multivesicular body protein 4b (Chmp4b) (Mus musculus (Mouse)).